Consider the following 461-residue polypeptide: Bifunctional protein GlmU (461 aa).

The segment at 1–229 (MNKYVVILAA…FSESLGVNDR (229 aa)) is pyrophosphorylase. Residues 8-11 (LAAG), K22, Q72, and 77-78 (GT) each bind UDP-N-acetyl-alpha-D-glucosamine. A Mg(2+)-binding site is contributed by D102. UDP-N-acetyl-alpha-D-glucosamine-binding residues include G139, E154, N169, and N227. Position 227 (N227) interacts with Mg(2+). Residues 230–250 (IALAQATKIMQRRINEEHMRN) are linker. The N-acetyltransferase stretch occupies residues 251–461 (GVSFIDPDTA…LPLAKDKEWE (211 aa)). Positions 332 and 350 each coordinate UDP-N-acetyl-alpha-D-glucosamine. H362 acts as the Proton acceptor in catalysis. 2 residues coordinate UDP-N-acetyl-alpha-D-glucosamine: Y365 and N376. Residues 385–386 (NY), A422, and R439 contribute to the acetyl-CoA site.

In the N-terminal section; belongs to the N-acetylglucosamine-1-phosphate uridyltransferase family. It in the C-terminal section; belongs to the transferase hexapeptide repeat family. As to quaternary structure, homotrimer. It depends on Mg(2+) as a cofactor.

The protein resides in the cytoplasm. It carries out the reaction alpha-D-glucosamine 1-phosphate + acetyl-CoA = N-acetyl-alpha-D-glucosamine 1-phosphate + CoA + H(+). The enzyme catalyses N-acetyl-alpha-D-glucosamine 1-phosphate + UTP + H(+) = UDP-N-acetyl-alpha-D-glucosamine + diphosphate. It functions in the pathway nucleotide-sugar biosynthesis; UDP-N-acetyl-alpha-D-glucosamine biosynthesis; N-acetyl-alpha-D-glucosamine 1-phosphate from alpha-D-glucosamine 6-phosphate (route II): step 2/2. It participates in nucleotide-sugar biosynthesis; UDP-N-acetyl-alpha-D-glucosamine biosynthesis; UDP-N-acetyl-alpha-D-glucosamine from N-acetyl-alpha-D-glucosamine 1-phosphate: step 1/1. Its pathway is bacterial outer membrane biogenesis; LPS lipid A biosynthesis. Catalyzes the last two sequential reactions in the de novo biosynthetic pathway for UDP-N-acetylglucosamine (UDP-GlcNAc). The C-terminal domain catalyzes the transfer of acetyl group from acetyl coenzyme A to glucosamine-1-phosphate (GlcN-1-P) to produce N-acetylglucosamine-1-phosphate (GlcNAc-1-P), which is converted into UDP-GlcNAc by the transfer of uridine 5-monophosphate (from uridine 5-triphosphate), a reaction catalyzed by the N-terminal domain. The polypeptide is Bifunctional protein GlmU (Lactobacillus johnsonii (strain CNCM I-12250 / La1 / NCC 533)).